An 89-amino-acid polypeptide reads, in one-letter code: Protein YxiC (89 aa).

In Bacillus subtilis (strain 168), this protein is Protein YxiC (yxiC).